Consider the following 263-residue polypeptide: Phosphatidylglycerol--prolipoprotein diacylglyceryl transferase (263 aa).

The next 4 helical transmembrane spans lie at 15 to 35 (ISIH…VYLA), 52 to 72 (FILL…VIFQ), 83 to 103 (IFAI…GAAV), and 112 to 132 (AIAV…AQSI). Arginine 134 provides a ligand contact to a 1,2-diacyl-sn-glycero-3-phospho-(1'-sn-glycerol). A run of 3 helical transmembrane segments spans residues 170–190 (VPTF…ILGL), 200–220 (GDVT…IEGM), and 227–247 (FVGL…GAVL).

The protein belongs to the Lgt family.

It is found in the cell membrane. The enzyme catalyses L-cysteinyl-[prolipoprotein] + a 1,2-diacyl-sn-glycero-3-phospho-(1'-sn-glycerol) = an S-1,2-diacyl-sn-glyceryl-L-cysteinyl-[prolipoprotein] + sn-glycerol 1-phosphate + H(+). The protein operates within protein modification; lipoprotein biosynthesis (diacylglyceryl transfer). Its function is as follows. Catalyzes the transfer of the diacylglyceryl group from phosphatidylglycerol to the sulfhydryl group of the N-terminal cysteine of a prolipoprotein, the first step in the formation of mature lipoproteins. This is Phosphatidylglycerol--prolipoprotein diacylglyceryl transferase from Streptococcus thermophilus (strain ATCC BAA-491 / LMD-9).